Reading from the N-terminus, the 351-residue chain is Dihydroorotate dehydrogenase (quinone) (351 aa).

Residues 61 to 65 and Thr-85 contribute to the FMN site; that span reads AGLDK. Position 65 (Lys-65) interacts with substrate. A substrate-binding site is contributed by 110-114; that stretch reads NRMGF. Residues Asn-139 and Asn-172 each contribute to the FMN site. Residue Asn-172 coordinates substrate. Residue Ser-175 is the Nucleophile of the active site. Asn-177 is a binding site for substrate. Residues Lys-217 and Thr-245 each coordinate FMN. 246–247 provides a ligand contact to substrate; the sequence is NT. FMN-binding positions include Gly-268, Gly-297, and 318-319; that span reads YS.

The protein belongs to the dihydroorotate dehydrogenase family. Type 2 subfamily. As to quaternary structure, monomer. Requires FMN as cofactor.

It localises to the cell membrane. The enzyme catalyses (S)-dihydroorotate + a quinone = orotate + a quinol. The protein operates within pyrimidine metabolism; UMP biosynthesis via de novo pathway; orotate from (S)-dihydroorotate (quinone route): step 1/1. Functionally, catalyzes the conversion of dihydroorotate to orotate with quinone as electron acceptor. The chain is Dihydroorotate dehydrogenase (quinone) from Xanthomonas axonopodis pv. citri (strain 306).